The following is a 115-amino-acid chain: Nitrogenase-stabilizing/protective protein NifW (115 aa).

It belongs to the NifW family. In terms of assembly, homotrimer; associates with NifD.

In terms of biological role, may protect the nitrogenase Fe-Mo protein from oxidative damage. The protein is Nitrogenase-stabilizing/protective protein NifW of Stutzerimonas stutzeri (strain A1501) (Pseudomonas stutzeri).